Here is a 361-residue protein sequence, read N- to C-terminus: Chorismate synthase (361 aa).

The disordered stretch occupies residues 37 to 59 (TEEDLQHDLDRRRPGTSRYTTPR). Residues 40-49 (DLQHDLDRRR) show a composition bias toward basic and acidic residues. NADP(+)-binding residues include R48 and R54. FMN contacts are provided by residues 125–127 (RSS), 238–239 (NA), G278, 293–297 (KPTSS), and R319.

This sequence belongs to the chorismate synthase family. Homotetramer. The cofactor is FMNH2.

It carries out the reaction 5-O-(1-carboxyvinyl)-3-phosphoshikimate = chorismate + phosphate. It participates in metabolic intermediate biosynthesis; chorismate biosynthesis; chorismate from D-erythrose 4-phosphate and phosphoenolpyruvate: step 7/7. In terms of biological role, catalyzes the anti-1,4-elimination of the C-3 phosphate and the C-6 proR hydrogen from 5-enolpyruvylshikimate-3-phosphate (EPSP) to yield chorismate, which is the branch point compound that serves as the starting substrate for the three terminal pathways of aromatic amino acid biosynthesis. This reaction introduces a second double bond into the aromatic ring system. The chain is Chorismate synthase from Erwinia tasmaniensis (strain DSM 17950 / CFBP 7177 / CIP 109463 / NCPPB 4357 / Et1/99).